Reading from the N-terminus, the 67-residue chain is Cell division protein ZapB (67 aa).

Positions 3–59 (LELLSKLETKIQTALETIELLKMELEEEKQKSIGLAEQNQQLSQDLNSWNEKVTGLV) form a coiled coil.

Belongs to the ZapB family. Homodimer. The ends of the coiled-coil dimer bind to each other, forming polymers. Interacts with FtsZ.

The protein localises to the cytoplasm. Its function is as follows. Non-essential, abundant cell division factor that is required for proper Z-ring formation. It is recruited early to the divisome by direct interaction with FtsZ, stimulating Z-ring assembly and thereby promoting cell division earlier in the cell cycle. Its recruitment to the Z-ring requires functional FtsA or ZipA. The sequence is that of Cell division protein ZapB from Shewanella woodyi (strain ATCC 51908 / MS32).